Consider the following 288-residue polypeptide: NAD kinase (288 aa).

D70 serves as the catalytic Proton acceptor. Residues 70 to 71 (DG), 144 to 145 (ND), R155, K172, D174, 185 to 190 (TGYSLS), and Q245 contribute to the NAD(+) site.

This sequence belongs to the NAD kinase family. A divalent metal cation serves as cofactor.

It is found in the cytoplasm. The enzyme catalyses NAD(+) + ATP = ADP + NADP(+) + H(+). Its function is as follows. Involved in the regulation of the intracellular balance of NAD and NADP, and is a key enzyme in the biosynthesis of NADP. Catalyzes specifically the phosphorylation on 2'-hydroxyl of the adenosine moiety of NAD to yield NADP. This Geobacter sp. (strain M21) protein is NAD kinase.